The primary structure comprises 299 residues: 4-hydroxy-tetrahydrodipicolinate synthase (299 aa).

A pyruvate-binding site is contributed by threonine 44. Catalysis depends on tyrosine 133, which acts as the Proton donor/acceptor. Catalysis depends on lysine 162, which acts as the Schiff-base intermediate with substrate. Isoleucine 204 contacts pyruvate.

Belongs to the DapA family. As to quaternary structure, homotetramer; dimer of dimers.

It localises to the cytoplasm. It carries out the reaction L-aspartate 4-semialdehyde + pyruvate = (2S,4S)-4-hydroxy-2,3,4,5-tetrahydrodipicolinate + H2O + H(+). The protein operates within amino-acid biosynthesis; L-lysine biosynthesis via DAP pathway; (S)-tetrahydrodipicolinate from L-aspartate: step 3/4. Functionally, catalyzes the condensation of (S)-aspartate-beta-semialdehyde [(S)-ASA] and pyruvate to 4-hydroxy-tetrahydrodipicolinate (HTPA). The sequence is that of 4-hydroxy-tetrahydrodipicolinate synthase from Thermus thermophilus (strain ATCC BAA-163 / DSM 7039 / HB27).